Here is a 310-residue protein sequence, read N- to C-terminus: L-lactate dehydrogenase (310 aa).

NAD(+) contacts are provided by residues valine 11, aspartate 32, tyrosine 62, and 76 to 77 (GV). Residues glutamine 79, arginine 85, and 117–120 (NPVD) each bind substrate. Residues 115 to 117 (ASN) and serine 140 contribute to the NAD(+) site. 145 to 148 (DTAR) provides a ligand contact to substrate. Arginine 150 and histidine 165 together coordinate beta-D-fructose 1,6-bisphosphate. The active-site Proton acceptor is histidine 172. Residue threonine 227 participates in substrate binding.

This sequence belongs to the LDH/MDH superfamily. LDH family. Homotetramer.

It localises to the cytoplasm. It catalyses the reaction (S)-lactate + NAD(+) = pyruvate + NADH + H(+). It functions in the pathway fermentation; pyruvate fermentation to lactate; (S)-lactate from pyruvate: step 1/1. Allosterically activated by fructose 1,6-bisphosphate (FBP). Functionally, catalyzes the conversion of lactate to pyruvate. This Allorhizobium ampelinum (strain ATCC BAA-846 / DSM 112012 / S4) (Agrobacterium vitis (strain S4)) protein is L-lactate dehydrogenase.